Consider the following 663-residue polypeptide: F-box protein DAS1 (663 aa).

Positions 46–91 constitute an F-box domain; it reads VFPLTKLPDELMQEVFSHLPQPDRLQLCLVNKRLNKIATKLLYRRI.

As to quaternary structure, interacts with SKP1. Component of the probable SCF(DAS1) complex containing CDC53, SKP1, RBX1 and DAS1.

Its pathway is protein modification; protein ubiquitination. Substrate recognition component of a SCF (SKP1-CUL1-F-box protein) E3 ubiquitin-protein ligase complex which mediates the ubiquitination and subsequent proteasomal degradation of target proteins. Probably recognizes and binds to phosphorylated target proteins. In Saccharomyces cerevisiae (strain ATCC 204508 / S288c) (Baker's yeast), this protein is F-box protein DAS1 (DAS1).